The following is a 195-amino-acid chain: Imidazoleglycerol-phosphate dehydratase (195 aa).

Belongs to the imidazoleglycerol-phosphate dehydratase family.

Its subcellular location is the cytoplasm. It catalyses the reaction D-erythro-1-(imidazol-4-yl)glycerol 3-phosphate = 3-(imidazol-4-yl)-2-oxopropyl phosphate + H2O. The protein operates within amino-acid biosynthesis; L-histidine biosynthesis; L-histidine from 5-phospho-alpha-D-ribose 1-diphosphate: step 6/9. The polypeptide is Imidazoleglycerol-phosphate dehydratase (Thermotoga maritima (strain ATCC 43589 / DSM 3109 / JCM 10099 / NBRC 100826 / MSB8)).